Reading from the N-terminus, the 176-residue chain is ATP-dependent protease subunit HslV (176 aa).

Residue threonine 2 is part of the active site. 3 residues coordinate Na(+): glycine 157, cysteine 160, and threonine 163.

It belongs to the peptidase T1B family. HslV subfamily. As to quaternary structure, a double ring-shaped homohexamer of HslV is capped on each side by a ring-shaped HslU homohexamer. The assembly of the HslU/HslV complex is dependent on binding of ATP.

The protein localises to the cytoplasm. It catalyses the reaction ATP-dependent cleavage of peptide bonds with broad specificity.. Allosterically activated by HslU binding. Protease subunit of a proteasome-like degradation complex believed to be a general protein degrading machinery. This chain is ATP-dependent protease subunit HslV, found in Photorhabdus laumondii subsp. laumondii (strain DSM 15139 / CIP 105565 / TT01) (Photorhabdus luminescens subsp. laumondii).